Consider the following 252-residue polypeptide: Phosphate import ATP-binding protein PstB 1 (252 aa).

Residues 6–247 (LQVSDLSVYY…PKHKETEDYI (242 aa)) enclose the ABC transporter domain. 38-45 (GPSGSGKS) serves as a coordination point for ATP.

Belongs to the ABC transporter superfamily. Phosphate importer (TC 3.A.1.7) family. In terms of assembly, the complex is composed of two ATP-binding proteins (PstB), two transmembrane proteins (PstC and PstA) and a solute-binding protein (PstS).

The protein resides in the cell membrane. The catalysed reaction is phosphate(out) + ATP + H2O = ADP + 2 phosphate(in) + H(+). Functionally, part of the ABC transporter complex PstSACB involved in phosphate import. Responsible for energy coupling to the transport system. The polypeptide is Phosphate import ATP-binding protein PstB 1 (Streptococcus agalactiae serotype Ia (strain ATCC 27591 / A909 / CDC SS700)).